Consider the following 101-residue polypeptide: Stefin-C (101 aa).

The residue at position 1 (M1) is an N-acetylmethionine. Residues 49-53 carry the Secondary area of contact motif; it reads QVVAG.

This sequence belongs to the cystatin family.

It is found in the cytoplasm. In terms of biological role, strong inhibitor of papain and cathepsin L but poor inhibitor of cathepsin B. In Bos taurus (Bovine), this protein is Stefin-C.